The following is a 180-amino-acid chain: Protein SPO16 homolog (180 aa).

Homooligomer. Interacts with SHOC, SYCP1 and SYCE3.

It is found in the chromosome. Plays a key role in reinforcing the integrity of the central element of the synaptonemal complex (SC) thereby stabilizing SC, ensuring progression of meiotic prophase I in male and female germ cells. Promotes homologous recombination and crossing-over in meiotic prophase I via its association with SHOC1. Required for the localization of TEX11 and MSH4 to recombination intermediates. The sequence is that of Protein SPO16 homolog from Homo sapiens (Human).